We begin with the raw amino-acid sequence, 407 residues long: Glucan 1,3-beta-glucosidase 1 (407 aa).

The first 22 residues, Met1–Ser22, serve as a signal peptide directing secretion. The active-site Proton donor is the Glu213. Residues Cys295 and Cys406 are joined by a disulfide bond. Glu312 (nucleophile) is an active-site residue.

This sequence belongs to the glycosyl hydrolase 5 (cellulase A) family.

It is found in the secreted. The catalysed reaction is Successive hydrolysis of beta-D-glucose units from the non-reducing ends of (1-&gt;3)-beta-D-glucans, releasing alpha-glucose.. Functionally, beta-glucanases participate in the metabolism of beta-glucan, the main structural component of the cell wall. It could also function biosynthetically as a transglycosylase. The chain is Glucan 1,3-beta-glucosidase 1 (exg1) from Schizosaccharomyces pombe (strain 972 / ATCC 24843) (Fission yeast).